The following is a 336-amino-acid chain: Protein-arginine kinase (336 aa).

The Phosphagen kinase C-terminal domain maps to 22–245 (IVMSSRIRLA…QQIINEEMQI (224 aa)). ATP is bound by residues 25 to 29 (SSRIR), His-83, Arg-116, 167 to 171 (RASVM), and 198 to 203 (RGIYGE).

This sequence belongs to the ATP:guanido phosphotransferase family.

It carries out the reaction L-arginyl-[protein] + ATP = N(omega)-phospho-L-arginyl-[protein] + ADP + H(+). In terms of biological role, catalyzes the specific phosphorylation of arginine residues in proteins. The chain is Protein-arginine kinase from Staphylococcus saprophyticus subsp. saprophyticus (strain ATCC 15305 / DSM 20229 / NCIMB 8711 / NCTC 7292 / S-41).